Here is a 1430-residue protein sequence, read N- to C-terminus: Caskin-1 (1430 aa).

6 ANK repeats span residues 48 to 77 (DGFSALHHAALNGNTELISLLLEAQAAVDI), 81 to 110 (KGMRPLHYAAWQGRKEPMKLVLKAGSAVNV), 114 to 143 (EGHIPLHLAAQHGHYDVSEMLLQHQSNPCI), 147 to 176 (SGKTPLDLACEFGRVGVVQLLLSSNMCAAL), 188 to 217 (NGTSPLHLAAKNGHIDIIRLLLQAGIDINR), and 220 to 249 (KSGTALHEAALCGKTEVVRLLLDSGINAQV). Y253 carries the phosphotyrosine modification. Residues 281-347 (SAALQVRATK…PSSLGEAIVK (67 aa)) enclose the SH3 domain. The interval 348 to 372 (RAGSRTGSEPSPPQGGGSLGPSAPP) is disordered. S358 bears the Phosphoserine mark. The interval 375–471 (IWVLRKPFAG…PKKLESSSAS (97 aa)) is CASK-binding. R398 is subject to Omega-N-methylarginine. Over residues 421–430 (QKSVSESSPG) the composition is skewed to polar residues. Positions 421-472 (QKSVSESSPGDSPVKPPEGSSGAARSQPPAAHAGQVYGEQPPKKLESSSASE) are disordered. A phosphoserine mark is found at S423 and S432. SAM domains lie at 474–537 (KSAE…LNIP) and 543–607 (HKPA…LAEL). S635 and S648 each carry phosphoserine. A compositionally biased stretch (low complexity) spans 667–679 (LSGPAEAGAAAAE). Disordered stretches follow at residues 667–1001 (LSGP…SAGS), 1015–1040 (GGGGRAIRRPPEGHPTPRPASPDPGR), 1055–1371 (GPDG…RQKL), and 1388–1407 (KIRQEDGQGPRPSSIEEKST). Positions 683 to 711 (NHLPATPRTTSRQESSLSGRARHMSSSQE) are enriched in polar residues. Phosphoserine occurs at positions 722 and 727. T740 is modified (phosphothreonine). S790 carries the phosphoserine modification. Pro residues predominate over residues 847 to 859 (PPAPGPVPPPVPA). A phosphoserine mark is found at S890, S892, and S988. The segment covering 1027–1036 (GHPTPRPASP) has biased composition (pro residues). T1066 is modified (phosphothreonine). At S1068 the chain carries Phosphoserine. Basic and acidic residues predominate over residues 1147–1159 (DTVKRRPKAKEPD). Pro residues predominate over residues 1190–1214 (PELPPPPPPAEPPPTDLMPLPPLPL). The residue at position 1258 (S1258) is a Phosphoserine. Phosphothreonine is present on T1267. Pro residues predominate over residues 1267–1282 (TPPPVSPKPPPPPTAP). Low complexity-rich tracts occupy residues 1283–1298 (KPAKALAGLQSSSATP), 1308–1326 (PPAALIKPASSPPSQSASP), and 1344–1358 (PRAAASVVSGPPVAS). Phosphoserine is present on S1362. The span at 1388–1406 (KIRQEDGQGPRPSSIEEKS) shows a compositional bias: basic and acidic residues.

In terms of assembly, polymerizes, via the tandem SAM domains, to form long, 8 nM wide fibers, upon which other proteins can assemble. Binds the CaM kinase domain of CASK. Forms a ternary complex with CASK and LIN7A, LIN7B or LIN7C. Competes with APBA1 that forms a similar complex with CASK and LIN7 proteins. The tripartite complex CASKIN1/CASK/LIN7(A/B/C) binds the cytoplasmic tail of NRXN1. As to expression, expressed in brain. Localized primarily to the neuropil and enriched in synaptic areas (at protein level).

The protein localises to the cytoplasm. In terms of biological role, may link the scaffolding protein CASK to downstream intracellular effectors. The sequence is that of Caskin-1 (Caskin1) from Rattus norvegicus (Rat).